The sequence spans 404 residues: Phosphoribulokinase, chloroplastic (404 aa).

The N-terminal 53 residues, Met1 to Cys53, are a transit peptide targeting the chloroplast. The cysteines at positions 69 and 108 are disulfide-linked.

The protein belongs to the phosphoribulokinase family.

Its subcellular location is the plastid. It is found in the chloroplast. It carries out the reaction D-ribulose 5-phosphate + ATP = D-ribulose 1,5-bisphosphate + ADP + H(+). It functions in the pathway carbohydrate biosynthesis; Calvin cycle. Its activity is regulated as follows. Light regulated via thioredoxin by reversible oxidation/reduction of sulfhydryl/disulfide groups. In Triticum aestivum (Wheat), this protein is Phosphoribulokinase, chloroplastic.